The following is a 491-amino-acid chain: Lysosomal Pro-X carboxypeptidase (491 aa).

Positions 1-17 (MGCRALLLLSFLLLGAA) are cleaved as a signal peptide. A propeptide spanning residues 18–43 (TTIPPRLKTLGSPHLSASPTPDPAVA) is cleaved from the precursor. N99 carries N-linked (GlcNAc...) asparagine glycosylation. S177 serves as the catalytic Charge relay system. Positions 192-332 (HIVVGALAAS…QNIFQALSVY (141 aa)) are SKS domain. Disulfide bonds link C213-C370, C231-C308, C262-C341, and C362-C392. Residues N315, N334, and N343 are each glycosylated (N-linked (GlcNAc...) asparagine). N-linked (GlcNAc...) asparagine glycosylation is present at N413. Active-site charge relay system residues include D428 and H453.

It belongs to the peptidase S28 family. Homodimer.

It is found in the lysosome. The catalysed reaction is Cleavage of a -Pro-|-Xaa bond to release a C-terminal amino acid.. Cleaves C-terminal amino acids linked to proline in peptides such as angiotensin II, III and des-Arg9-bradykinin. This cleavage occurs at acidic pH, but enzymatic activity is retained with some substrates at neutral pH. This is Lysosomal Pro-X carboxypeptidase (Prcp) from Mus musculus (Mouse).